The chain runs to 272 residues: Putative phosphoenolpyruvate synthase regulatory protein (272 aa).

152 to 159 contributes to the ADP binding site; that stretch reads GVSRCGKT.

It belongs to the pyruvate, phosphate/water dikinase regulatory protein family. PSRP subfamily.

The enzyme catalyses [pyruvate, water dikinase] + ADP = [pyruvate, water dikinase]-phosphate + AMP + H(+). It carries out the reaction [pyruvate, water dikinase]-phosphate + phosphate + H(+) = [pyruvate, water dikinase] + diphosphate. Bifunctional serine/threonine kinase and phosphorylase involved in the regulation of the phosphoenolpyruvate synthase (PEPS) by catalyzing its phosphorylation/dephosphorylation. This chain is Putative phosphoenolpyruvate synthase regulatory protein, found in Pseudomonas fluorescens (strain Pf0-1).